Consider the following 89-residue polypeptide: Small ribosomal subunit protein uS15 (89 aa).

This sequence belongs to the universal ribosomal protein uS15 family. Part of the 30S ribosomal subunit. Forms a bridge to the 50S subunit in the 70S ribosome, contacting the 23S rRNA.

One of the primary rRNA binding proteins, it binds directly to 16S rRNA where it helps nucleate assembly of the platform of the 30S subunit by binding and bridging several RNA helices of the 16S rRNA. In terms of biological role, forms an intersubunit bridge (bridge B4) with the 23S rRNA of the 50S subunit in the ribosome. This is Small ribosomal subunit protein uS15 from Buchnera aphidicola subsp. Acyrthosiphon pisum (strain 5A).